We begin with the raw amino-acid sequence, 595 residues long: DNA ligase (595 aa).

NAD(+) contacts are provided by residues 32 to 36, 81 to 82, and Glu113; these read DEKYD and SL. Lys115 functions as the N6-AMP-lysine intermediate in the catalytic mechanism. Residues Arg136, Glu178, Lys296, and Lys320 each contribute to the NAD(+) site. Zn(2+) contacts are provided by Cys414, Cys417, Cys432, and Cys438.

This sequence belongs to the NAD-dependent DNA ligase family. LigA subfamily. Mg(2+) is required as a cofactor. Mn(2+) serves as cofactor.

The enzyme catalyses NAD(+) + (deoxyribonucleotide)n-3'-hydroxyl + 5'-phospho-(deoxyribonucleotide)m = (deoxyribonucleotide)n+m + AMP + beta-nicotinamide D-nucleotide.. In terms of biological role, DNA ligase that catalyzes the formation of phosphodiester linkages between 5'-phosphoryl and 3'-hydroxyl groups in double-stranded DNA using NAD as a coenzyme and as the energy source for the reaction. It is essential for DNA replication and repair of damaged DNA. This is DNA ligase from Blochmanniella pennsylvanica (strain BPEN).